The following is a 101-amino-acid chain: MDKSKRLFRKSKRSFRRRLPPIGSGDRIDYRNMSLISQFISEQGKILSRRVNRLTLKQQRLITIAIKQARILSSLPFLNNEKQFEKTESIPRTTGPRTRNK.

Basic residues predominate over residues 1 to 19; the sequence is MDKSKRLFRKSKRSFRRRL. Residues 1–23 form a disordered region; that stretch reads MDKSKRLFRKSKRSFRRRLPPIG.

Belongs to the bacterial ribosomal protein bS18 family. Part of the 30S ribosomal subunit.

It is found in the plastid. It localises to the chloroplast. In Liriodendron tulipifera (Tuliptree), this protein is Small ribosomal subunit protein bS18c.